The sequence spans 352 residues: S-norcoclaurine synthase 1 (352 aa).

The Fe2OG dioxygenase domain occupies 200 to 304; sequence KPLRTVFNRE…RLSIAAFHDP (105 aa). Residues His-228, Asp-230, and His-285 each contribute to the Fe cation site.

This sequence belongs to the iron/ascorbate-dependent oxidoreductase family. Monomer. It depends on Fe cation as a cofactor.

The enzyme catalyses (4-hydroxyphenyl)acetaldehyde + dopamine = (S)-norcoclaurine + H2O. Its activity is regulated as follows. Inhibited by O-phenanthroline, but not by EDTA. In terms of biological role, involved in the biosynthesis of the common precursor of all benzylisoquinoline alkaloids such as morphine, sanguinarine, codeine or berberine. Condenses dopamine and phenylacetaldehyde, 3,4-dihydrophenylacetaldehyde or 4-hydroxyphenylacetaldehyde. This Coptis japonica (Japanese goldthread) protein is S-norcoclaurine synthase 1 (NCS1).